A 63-amino-acid polypeptide reads, in one-letter code: Large ribosomal subunit protein uL29 (63 aa).

Belongs to the universal ribosomal protein uL29 family.

The polypeptide is Large ribosomal subunit protein uL29 (Sulfurovum sp. (strain NBC37-1)).